The primary structure comprises 1612 residues: uncharacterized protein (1612 aa).

The stretch at 23 to 52 (ENKNIEMTTLKDKKEMKNENLSKINVKKEN) forms a coiled coil. A compositionally biased stretch (basic and acidic residues) spans 46–93 (INVKKENHDKNHDKNHDKNHDKNHDKNHDKNHDKNHDKNHDKNHDKNH). 2 disordered regions span residues 46–94 (INVK…KNHV) and 369–400 (EDDNKSDNPLYSNNNTLKEQNTSTPLPSHEIQ). Positions 375–394 (DNPLYSNNNTLKEQNTSTPL) are enriched in polar residues. A helical membrane pass occupies residues 479-499 (FIVTLSEICLILTPHYVNIIN). Disordered stretches follow at residues 698 to 777 (TSLT…EKKL), 992 to 1037 (NELD…KNDP), 1091 to 1157 (SGKS…RNMS), and 1257 to 1291 (NQTTNNNTYNNQTSNHMNENLHTDESSKSNNNQDK). Residues 708-777 (KNDEIKKTGE…KKKTGEEKKL (70 aa)) are compositionally biased toward basic and acidic residues. Low complexity-rich tracts occupy residues 996-1028 (NNNNKNNNNNKNNNNNKNNNNNNNNNNNNNNNN), 1102-1140 (SNNNNNVNNMNNNMNNNMNNNMNNHMNSNNNVVDSNSTN), and 1257-1271 (NQTTNNNTYNNQTSN). Coiled-coil stretches lie at residues 1338–1362 (YCNNKNKNKNKNKNKNKNMEQINNK), 1444–1469 (SNKKILIEKLIDKLDDYKKKINIDND), and 1553–1601 (NMED…KFLT). Over residues 1554–1566 (MEDEKNEKLNDKE) the composition is skewed to basic and acidic residues. The interval 1554–1612 (MEDEKNEKLNDKEGEYEDVTENLNEQEAEEEAEEEAEEEEEEEDKFLTPEHLPINVEIK) is disordered. Acidic residues predominate over residues 1567-1597 (GEYEDVTENLNEQEAEEEAEEEAEEEEEEED).

The protein resides in the membrane. This is an uncharacterized protein from Plasmodium falciparum (isolate 3D7).